Here is a 112-residue protein sequence, read N- to C-terminus: ATP synthase subunit c (112 aa).

The next 2 membrane-spanning stretches (helical) occupy residues 36–56 and 81–101; these read FSVL…AIGM and MFIA…IALI.

Belongs to the ATPase C chain family. F-type ATPases have 2 components, F(1) - the catalytic core - and F(0) - the membrane proton channel. F(1) has five subunits: alpha(3), beta(3), gamma(1), delta(1), epsilon(1). F(0) has three main subunits: a(1), b(2) and c(10-14). The alpha and beta chains form an alternating ring which encloses part of the gamma chain. F(1) is attached to F(0) by a central stalk formed by the gamma and epsilon chains, while a peripheral stalk is formed by the delta and b chains.

It is found in the cell inner membrane. In terms of biological role, f(1)F(0) ATP synthase produces ATP from ADP in the presence of a proton or sodium gradient. F-type ATPases consist of two structural domains, F(1) containing the extramembraneous catalytic core and F(0) containing the membrane proton channel, linked together by a central stalk and a peripheral stalk. During catalysis, ATP synthesis in the catalytic domain of F(1) is coupled via a rotary mechanism of the central stalk subunits to proton translocation. Its function is as follows. Key component of the F(0) channel; it plays a direct role in translocation across the membrane. A homomeric c-ring of between 10-14 subunits forms the central stalk rotor element with the F(1) delta and epsilon subunits. This Campylobacter jejuni subsp. jejuni serotype O:6 (strain 81116 / NCTC 11828) protein is ATP synthase subunit c.